The following is a 104-amino-acid chain: UPF0213 protein in VLF1-GP41 intergenic region (104 aa).

Residues 9–89 enclose the GIY-YIG domain; sequence KVWCVYILRQ…SKYFKLRLIK (81 aa).

The protein belongs to the UPF0213 family.

This chain is UPF0213 protein in VLF1-GP41 intergenic region, found in Autographa californica nuclear polyhedrosis virus (AcMNPV).